A 319-amino-acid chain; its full sequence is MASPAAGGVVIVGSGLIGRSWAMLFASGGFKVKLYDIEQQQITDALENIRKEMKSLEQSGSLKGSLSAERQLSLISGCGNLAEAVEGAVHIQECVPENLELKKKIFAQLDRIVDDRVILSSSSSCLLPSKLFSGLAHVKQCIVAHPVNPPYYVPLVELVPHPETAPATMDRTYALMKKIGQSPVRVLKEIDGFVLNRLQYAVISEAWRLVEEEIVSPSDLDLVMSDGLGMRYAFIGPLETMHLNAEGVISYCERYSEGMKHVLSTFGPVPEFSGATVERVSEDMCMKVPDDPEHLAARRQWRDDCLMKLSILKYQMQPK.

Alanine 2 is modified (N-acetylalanine). Serine 3 carries the phosphoserine modification. NAD(+) contacts are provided by residues 16-17 (LI), aspartate 36, glutamate 97, and lysine 102.

This sequence belongs to the 3-hydroxyacyl-CoA dehydrogenase family. As to quaternary structure, homodimer. In terms of tissue distribution, widely expressed, with highest levels in liver. Undetectable in skeletal muscle.

It localises to the cytoplasm. The enzyme catalyses L-gulonate + NAD(+) = 3-dehydro-L-gulonate + NADH + H(+). Its activity is regulated as follows. Inhibited by malonate. Functionally, has high L-gulonate 3-dehydrogenase activity. It also exhibits low dehydrogenase activity toward L-3-hydroxybutyrate (HBA) and L-threonate. In Mus musculus (Mouse), this protein is Lambda-crystallin homolog (Cryl1).